The following is a 315-amino-acid chain: Beta-carotene hydroxylase 1, chloroplastic (315 aa).

The transit peptide at 1–58 (MAAEISISASSRAICLQRNPFPAPKYFATAPPLLFFSPLTCNLDAILRSRRKPRLAAC) directs the protein to the chloroplast. Helical transmembrane passes span 112–132 (YLVA…ISVY) and 146–166 (FSEM…MEYW). Residues 159 to 286 (AAIGMEYWAR…KFDGVPYGLF (128 aa)) form the Fatty acid hydroxylase domain. A Histidine box-1 motif is present at residues 171–176 (HRALWH). Positions 183–187 (HESHH) match the Histidine box-2 motif. Transmembrane regions (helical) follow at residues 196-216 (LNDI…SFGF) and 222-242 (IPGL…AYMF). A Histidine box-3 motif is present at residues 244–249 (HDGLVH). Residues 270 to 274 (HQLHH) carry the Histidine box-4 motif.

It belongs to the sterol desaturase family.

The protein localises to the plastid. It localises to the chloroplast membrane. The catalysed reaction is all-trans-beta-carotene + 4 reduced [2Fe-2S]-[ferredoxin] + 2 O2 + 4 H(+) = all-trans-zeaxanthin + 4 oxidized [2Fe-2S]-[ferredoxin] + 2 H2O. It catalyses the reaction all-trans-beta-carotene + 2 reduced [2Fe-2S]-[ferredoxin] + O2 + 2 H(+) = beta-cryptoxanthin + 2 oxidized [2Fe-2S]-[ferredoxin] + H2O. It carries out the reaction beta-cryptoxanthin + 2 reduced [2Fe-2S]-[ferredoxin] + O2 + 2 H(+) = all-trans-zeaxanthin + 2 oxidized [2Fe-2S]-[ferredoxin] + H2O. Inhibited by o-phenanthroline and 8-hydroxyquinoline. Functionally, nonheme diiron monooxygenase involved in the biosynthesis of xanthophylls. Specific for beta-ring hydroxylations of beta-carotene. Produces beta-cryptoxanthin and zeaxanthin. Uses ferredoxin as an electron donor. The polypeptide is Beta-carotene hydroxylase 1, chloroplastic (Capsicum annuum (Capsicum pepper)).